We begin with the raw amino-acid sequence, 173 residues long: Flavodoxin 2 (173 aa).

Residues 3-165 form the Flavodoxin-like domain; that stretch reads MGLFYGSSTC…RIQSWCEQIL (163 aa).

The protein belongs to the flavodoxin family. Requires FMN as cofactor.

Its function is as follows. Low-potential electron donor to a number of redox enzymes. The chain is Flavodoxin 2 (fldB) from Escherichia coli O157:H7.